The sequence spans 194 residues: RNA polymerase II subunit A C-terminal domain phosphatase SSU72 like protein 5 (194 aa).

Belongs to the SSU72 phosphatase family.

It localises to the nucleus. It carries out the reaction O-phospho-L-seryl-[protein] + H2O = L-seryl-[protein] + phosphate. The enzyme catalyses O-phospho-L-threonyl-[protein] + H2O = L-threonyl-[protein] + phosphate. Protein phosphatase that catalyzes the dephosphorylation of the C-terminal domain of RNA polymerase II. Plays a role in RNA processing and termination. The protein is RNA polymerase II subunit A C-terminal domain phosphatase SSU72 like protein 5 of Homo sapiens (Human).